A 238-amino-acid polypeptide reads, in one-letter code: Probable transcriptional regulatory protein VS_II1504 (238 aa).

It belongs to the TACO1 family.

It is found in the cytoplasm. This chain is Probable transcriptional regulatory protein VS_II1504, found in Vibrio atlanticus (strain LGP32) (Vibrio splendidus (strain Mel32)).